A 348-amino-acid chain; its full sequence is Anthranilate phosphoribosyltransferase (348 aa).

Residues Gly-89, 92-93 (GD), Thr-97, 99-102 (NIST), 117-125 (KHGNRSVSS), and Ser-129 contribute to the 5-phospho-alpha-D-ribose 1-diphosphate site. Anthranilate is bound at residue Gly-89. Ser-101 contributes to the Mg(2+) binding site. Asn-120 lines the anthranilate pocket. Arg-175 contacts anthranilate. Mg(2+) contacts are provided by Asp-233 and Glu-234.

It belongs to the anthranilate phosphoribosyltransferase family. Homodimer. Mg(2+) serves as cofactor.

It catalyses the reaction N-(5-phospho-beta-D-ribosyl)anthranilate + diphosphate = 5-phospho-alpha-D-ribose 1-diphosphate + anthranilate. Its pathway is amino-acid biosynthesis; L-tryptophan biosynthesis; L-tryptophan from chorismate: step 2/5. Functionally, catalyzes the transfer of the phosphoribosyl group of 5-phosphorylribose-1-pyrophosphate (PRPP) to anthranilate to yield N-(5'-phosphoribosyl)-anthranilate (PRA). This is Anthranilate phosphoribosyltransferase from Shewanella putrefaciens (strain CN-32 / ATCC BAA-453).